The sequence spans 458 residues: MATNKERLFAPGALGPGSGYPGAGFPFAFPGALRGSPPFEMLSPSFRGLGQPDLPKEMASLSVETQSTSSEEMVPSSPSPPPPPRVYKPCFVCNDKSSGYHYGVSSCEGCKGFFRRSIQKNMVYTCHRDKNCIINKVTRNRCQYCRLQKCFEVGMSKEAVRNDRNKKKKEVKEEGSPDSYELSPQLEELITKVSKAHQETFPSLCQLGKYTTNSSADHRVQLDLGLWDKFSELATKCIIKIVEFAKRLPGFTGLSIADQITLLKAACLDILMLRICTRYTPEQDTMTFSDGLTLNRTQMHNAGFGPLTDLVFAFAGQLLPLEMDDTETGLLSAICLICGDRMDLEEPEKVDKLQEPLLEALRLYARRRRPSQPYMFPRMLMKITDLRGISTKGAERAITLKMEIPGPMPPLIREMLENPEMFEDDSSKPGPHPKASSEDEAPGGQGKRGQSPQPDQGP.

Positions 1-89 (MATNKERLFA…PPPPPRVYKP (89 aa)) are modulating. Omega-N-methylarginine is present on Arg34. Residues 58-83 (MASLSVETQSTSSEEMVPSSPSPPPP) form a disordered region. The segment covering 62–71 (SVETQSTSSE) has biased composition (polar residues). 2 consecutive NR C4-type zinc fingers follow at residues 90–110 (CFVC…CEGC) and 126–150 (CHRD…LQKC). The segment at residues 90 to 155 (CFVCNDKSSG…RLQKCFEVGM (66 aa)) is a DNA-binding region (nuclear receptor). Residues 156 to 184 (SKEAVRNDRNKKKKEVKEEGSPDSYELSP) are hinge. The disordered stretch occupies residues 161 to 180 (RNDRNKKKKEVKEEGSPDSY). Residues Lys172 and Lys401 each participate in a glycyl lysine isopeptide (Lys-Gly) (interchain with G-Cter in SUMO2) cross-link. The region spanning 185-419 (QLEELITKVS…PLIREMLENP (235 aa)) is the NR LBD domain. Residues 409 to 458 (PPLIREMLENPEMFEDDSSKPGPHPKASSEDEAPGGQGKRGQSPQPDQGP) form a disordered region. Over residues 448–458 (RGQSPQPDQGP) the composition is skewed to polar residues.

The protein belongs to the nuclear hormone receptor family. NR1 subfamily. In terms of assembly, homodimer. Heterodimer with a RXR molecule. Binds DNA preferentially as a RAR/RXR heterodimer. Forms a complex with PUS1 and the SRA1 RNA in the nucleus.

The protein resides in the nucleus. The protein localises to the cytoplasm. Functionally, receptor for retinoic acid. Retinoic acid receptors bind as heterodimers to their target response elements in response to their ligands, all-trans or 9-cis retinoic acid, and regulate gene expression in various biological processes. The RAR/RXR heterodimers bind to the retinoic acid response elements (RARE) composed of tandem 5'-AGGTCA-3' sites known as DR1-DR5. In the absence of ligand, acts mainly as an activator of gene expression due to weak binding to corepressors. Required for limb bud development. In concert with RARA or RARB, required for skeletal growth, matrix homeostasis and growth plate function. This Mus musculus (Mouse) protein is Retinoic acid receptor gamma (Rarg).